Consider the following 145-residue polypeptide: Transmembrane protein 216 (145 aa).

Transmembrane regions (helical) follow at residues 22-42 (ILFF…LFIF), 56-76 (LVLD…RLFF), 89-109 (LSIS…YLLL), and 122-142 (GILL…LAAF).

As to quaternary structure, part of the tectonic-like complex (also named B9 complex). Interacts with TMEM107.

It is found in the membrane. The protein resides in the cytoplasm. Its subcellular location is the cytoskeleton. It localises to the cilium basal body. Functionally, part of the tectonic-like complex which is required for tissue-specific ciliogenesis and may regulate ciliary membrane composition. The sequence is that of Transmembrane protein 216 (TMEM216) from Homo sapiens (Human).